The following is a 41-amino-acid chain: Large ribosomal subunit protein bL36 (41 aa).

It belongs to the bacterial ribosomal protein bL36 family.

The polypeptide is Large ribosomal subunit protein bL36 (Azorhizobium caulinodans (strain ATCC 43989 / DSM 5975 / JCM 20966 / LMG 6465 / NBRC 14845 / NCIMB 13405 / ORS 571)).